Consider the following 123-residue polypeptide: Small ribosomal subunit protein uS12 (123 aa).

The residue at position 89 (aspartate 89) is a 3-methylthioaspartic acid. The tract at residues 100 to 123 (GSLDTSGVKDRKQGRSKYGTKRPK) is disordered. Residues 113–123 (GRSKYGTKRPK) show a composition bias toward basic residues.

The protein belongs to the universal ribosomal protein uS12 family. As to quaternary structure, part of the 30S ribosomal subunit. Contacts proteins S8 and S17. May interact with IF1 in the 30S initiation complex.

Functionally, with S4 and S5 plays an important role in translational accuracy. In terms of biological role, interacts with and stabilizes bases of the 16S rRNA that are involved in tRNA selection in the A site and with the mRNA backbone. Located at the interface of the 30S and 50S subunits, it traverses the body of the 30S subunit contacting proteins on the other side and probably holding the rRNA structure together. The combined cluster of proteins S8, S12 and S17 appears to hold together the shoulder and platform of the 30S subunit. This chain is Small ribosomal subunit protein uS12, found in Ectopseudomonas mendocina (strain ymp) (Pseudomonas mendocina).